We begin with the raw amino-acid sequence, 445 residues long: Exodeoxyribonuclease 7 large subunit (445 aa).

It belongs to the XseA family. In terms of assembly, heterooligomer composed of large and small subunits.

It is found in the cytoplasm. The enzyme catalyses Exonucleolytic cleavage in either 5'- to 3'- or 3'- to 5'-direction to yield nucleoside 5'-phosphates.. Functionally, bidirectionally degrades single-stranded DNA into large acid-insoluble oligonucleotides, which are then degraded further into small acid-soluble oligonucleotides. The polypeptide is Exodeoxyribonuclease 7 large subunit (Geotalea daltonii (strain DSM 22248 / JCM 15807 / FRC-32) (Geobacter daltonii)).